The sequence spans 89 residues: Exodeoxyribonuclease 7 small subunit (89 aa).

The tract at residues 1 to 23 (MRPWRCVSMAKAPAAPSSTQPDP) is disordered.

It belongs to the XseB family. As to quaternary structure, heterooligomer composed of large and small subunits.

The protein localises to the cytoplasm. The enzyme catalyses Exonucleolytic cleavage in either 5'- to 3'- or 3'- to 5'-direction to yield nucleoside 5'-phosphates.. In terms of biological role, bidirectionally degrades single-stranded DNA into large acid-insoluble oligonucleotides, which are then degraded further into small acid-soluble oligonucleotides. The chain is Exodeoxyribonuclease 7 small subunit from Acidovorax sp. (strain JS42).